The chain runs to 409 residues: Protein naked cuticle homolog 2 (409 aa).

A lipid anchor (N-myristoyl glycine) is attached at Gly2. Positions 109 to 144 (AEDNRQEWVFTLYDFDNSGKVTKEDMSSLMHTIYDV) constitute an EF-hand domain. Asp122, Asp124, Ser126, Lys128, and Asp133 together coordinate Ca(2+). Disordered regions lie at residues 160–224 (LRVK…YCVD), 243–315 (TSRF…RYPG), 346–366 (SHTH…RIRS), and 388–409 (RHEH…YHQT). Composition is skewed to basic and acidic residues over residues 171 to 185 (AARR…RETS) and 193 to 224 (VRSE…YCVD). A compositionally biased stretch (low complexity) spans 247–268 (DSSSPDADQDPPSRSSHSQSRP). A compositionally biased stretch (basic residues) spans 389–409 (HEHHHHHEHHHHHHYHHYHQT).

This sequence belongs to the NKD family. In terms of tissue distribution, expressed ubiquitously until 1 dpf, when expression becomes confined to the anterior CNS, with slight expression in the developing tail.

Its subcellular location is the cell membrane. It is found in the cytoplasm. Functionally, cell autonomous antagonist of both the canonical and non-canonical Wnt signaling pathways. The protein is Protein naked cuticle homolog 2 (nkd2) of Danio rerio (Zebrafish).